The following is a 311-amino-acid chain: Olfactory receptor 2A5 (311 aa).

Over 1 to 24 the chain is Extracellular; that stretch reads MTKNQTWVTEFILLGFPLSLRIQM. Residue Asn-4 is glycosylated (N-linked (GlcNAc...) asparagine). A helical transmembrane segment spans residues 25 to 48; sequence LLSGLFSLLYVFTLLGNGAILGLI. Topologically, residues 49-56 are cytoplasmic; it reads WLDSRLHT. Residues 57–78 traverse the membrane as a helical segment; that stretch reads PMYFFLSHLAIIDISYASNNVP. Over 79 to 100 the chain is Extracellular; that stretch reads KMLTNLGLNKRKTISFVPCTMQ. Cysteines 97 and 189 form a disulfide. Residues 101–120 traverse the membrane as a helical segment; the sequence is TFLYMAFAHTECLILVMMSY. The Cytoplasmic portion of the chain corresponds to 121-139; it reads DRYMAICHPLQYSVIMRWG. Residues 140 to 158 traverse the membrane as a helical segment; sequence VCTVLAVTSWACGSLLALV. The Extracellular portion of the chain corresponds to 159-196; the sequence is HVVLILRLPFCGPHEINHFFCEILSVLKLACADTWLNQ. Residues 197–219 traverse the membrane as a helical segment; that stretch reads VVIFAASVFILVGPLCLVLVSYS. Topologically, residues 220–236 are cytoplasmic; it reads RILAAILRIQSGEGRRK. The helical transmembrane segment at 237-259 threads the bilayer; sequence AFSTCSSHLCMVGLFFGSAIVMY. The Extracellular segment spans residues 260-272; the sequence is MAPKSRHPEEQQK. Residues 273-292 form a helical membrane-spanning segment; sequence VLSLFYSLFNPMLNPLIYSL. The Cytoplasmic portion of the chain corresponds to 293 to 311; that stretch reads RNAEVKGALKRVLWKQRSK.

It belongs to the G-protein coupled receptor 1 family.

Its subcellular location is the cell membrane. Functionally, odorant receptor. This is Olfactory receptor 2A5 (OR2A5) from Homo sapiens (Human).